Here is a 575-residue protein sequence, read N- to C-terminus: 2-isopropylmalate synthase (575 aa).

The region spanning 31–305 (PTWLSTDLRD…APGLDFSDIA (275 aa)) is the Pyruvate carboxyltransferase domain. Mg(2+) contacts are provided by D40, H244, H246, and N280. The regulatory domain stretch occupies residues 437–575 (PVQASPDFSD…RFAGEEQGKG (139 aa)).

Belongs to the alpha-IPM synthase/homocitrate synthase family. LeuA type 2 subfamily. As to quaternary structure, homodimer. Requires Mg(2+) as cofactor.

Its subcellular location is the cytoplasm. It carries out the reaction 3-methyl-2-oxobutanoate + acetyl-CoA + H2O = (2S)-2-isopropylmalate + CoA + H(+). It participates in amino-acid biosynthesis; L-leucine biosynthesis; L-leucine from 3-methyl-2-oxobutanoate: step 1/4. Catalyzes the condensation of the acetyl group of acetyl-CoA with 3-methyl-2-oxobutanoate (2-ketoisovalerate) to form 3-carboxy-3-hydroxy-4-methylpentanoate (2-isopropylmalate). In Herbaspirillum seropedicae (strain SmR1), this protein is 2-isopropylmalate synthase.